Reading from the N-terminus, the 628-residue chain is Chaperone protein DnaK (628 aa).

A Phosphothreonine; by autocatalysis modification is found at threonine 195. Residues 545 to 628 form a disordered region; it reads QLEENEGAAQ…VIDADFKAAE (84 aa). The segment covering 555–591 has biased composition (basic and acidic residues); sequence DAKDALKAAADEAEEAVRSEDDARIESAQKRLEEELR. Low complexity predominate over residues 596 to 612; it reads AQQAAGQGQPQGAQAQG. Residues 614 to 628 show a composition bias toward basic and acidic residues; it reads KADDDVIDADFKAAE.

The protein belongs to the heat shock protein 70 family.

Its function is as follows. Acts as a chaperone. The protein is Chaperone protein DnaK of Deinococcus deserti (strain DSM 17065 / CIP 109153 / LMG 22923 / VCD115).